The primary structure comprises 297 residues: Tyrosine recombinase XerD (297 aa).

Residues 1–86 (MKNLALIDLF…AMRKLFQYLY (86 aa)) form the Core-binding (CB) domain. A Tyr recombinase domain is found at 107-291 (RLPKYLTEQQ…AKERLKRLHE (185 aa)). Catalysis depends on residues R147, K171, H243, R246, and H269. Y278 serves as the catalytic O-(3'-phospho-DNA)-tyrosine intermediate.

The protein belongs to the 'phage' integrase family. XerD subfamily. As to quaternary structure, forms a cyclic heterotetrameric complex composed of two molecules of XerC and two molecules of XerD.

The protein localises to the cytoplasm. Its function is as follows. Site-specific tyrosine recombinase, which acts by catalyzing the cutting and rejoining of the recombining DNA molecules. The XerC-XerD complex is essential to convert dimers of the bacterial chromosome into monomers to permit their segregation at cell division. It also contributes to the segregational stability of plasmids. This chain is Tyrosine recombinase XerD, found in Haemophilus influenzae (strain ATCC 51907 / DSM 11121 / KW20 / Rd).